We begin with the raw amino-acid sequence, 230 residues long: uncharacterized protein (230 aa).

A signal peptide spans 1–18 (MRQYTSKSILFMTAIALS).

This is an uncharacterized protein from Pasteurella multocida (strain Pm70).